Consider the following 170-residue polypeptide: Probable peptide methionine sulfoxide reductase (170 aa).

This sequence belongs to the MsrA Met sulfoxide reductase family.

It is found in the cytoplasm. The protein resides in the nucleus. The catalysed reaction is L-methionyl-[protein] + [thioredoxin]-disulfide + H2O = L-methionyl-(S)-S-oxide-[protein] + [thioredoxin]-dithiol. It catalyses the reaction [thioredoxin]-disulfide + L-methionine + H2O = L-methionine (S)-S-oxide + [thioredoxin]-dithiol. Its function is as follows. Has an important function as a repair enzyme for proteins that have been inactivated by oxidation. Catalyzes the reversible oxidation-reduction of methionine sulfoxide in proteins to methionine. The sequence is that of Probable peptide methionine sulfoxide reductase (mxr1) from Schizosaccharomyces pombe (strain 972 / ATCC 24843) (Fission yeast).